Here is a 456-residue protein sequence, read N- to C-terminus: MVVGQRERKRRCIRGEPLMNDTTWVLDGGRLIDPANGIDRIARLVLHEGKVHSIDTPDGDVPPDAGRLDVTGKIVAPGLVDLATELREPGSEEDETIQTGSNAALAGGYTTVLCCSSTKPLMDSAASVQLVRQIAQRVDGVRVLPIACLSKGRQAEQMAELGILAAAGAAGFSDTPRPMPNDALLKRALDYCRMFDLPIFDRPEVPELADGGVMHDGQIGLILGLKGLPTEAEDLAVARDVRLAEATKGRLHVGPVSTMGSIDMIGRVKSRGIHISASVCPHNLFGSDELLRSYDSRYKVHPPMRSPSHVEALRNAVAEGVIDAIESGHMPRAQEKKANDLDLAPFGASALETTLAAIATDLVETKILPWSRAIECLSTAPARIAGVKGGTLSVGANADVTVIDPLNAWSVEAKEFRSRCHSSPMTGRTLTARVTHTLVGGRLKFELHPTVASAAS.

Belongs to the metallo-dependent hydrolases superfamily. DHOase family. Class I DHOase subfamily.

It carries out the reaction (S)-dihydroorotate + H2O = N-carbamoyl-L-aspartate + H(+). It functions in the pathway pyrimidine metabolism; UMP biosynthesis via de novo pathway; (S)-dihydroorotate from bicarbonate: step 3/3. Functionally, catalyzes the reversible cyclization of carbamoyl aspartate to dihydroorotate. In Rhodopirellula baltica (strain DSM 10527 / NCIMB 13988 / SH1), this protein is Putative dihydroorotase.